We begin with the raw amino-acid sequence, 326 residues long: UDP-N-acetylglucosamine transporter (326 aa).

Transmembrane regions (helical) follow at residues 4-24 (NLKY…VLTM), 38-58 (LSST…IFLV), 136-156 (LGMY…FVQW), 174-194 (FVGL…GVYF), 212-232 (LGFF…GELV), 243-263 (QLTW…AAVI), 269-289 (ILKG…SYFW), and 293-313 (FVPT…TFLY).

This sequence belongs to the nucleotide-sugar transporter family. SLC35A subfamily. In terms of assembly, interacts with SLC35A2; the interaction is reduced in the presence of SLC35A4. Found in a complex with SLC35A2 and SLC35A4. Interacts with MGAT4B. In terms of processing, O-Glcnacylation regulates the stability of SLC35A3 and the specific complex formation with MGAT4B.

The protein localises to the golgi apparatus membrane. The enzyme catalyses UMP(out) + UDP-N-acetyl-alpha-D-glucosamine(in) = UMP(in) + UDP-N-acetyl-alpha-D-glucosamine(out). Transports diphosphate-N-acetylglucosamine (UDP-GlcNAc) from the cytosol into the lumen of the Golgi apparatus, functioning as an antiporter that exchanges UDP-N-acetyl-alpha-D-glucosamine for UMP. May supply UDP-GlcNAc as substrate for Golgi-resident glycosyltransferases that generate highly branched, multiantennary complex N-glycans and keratan sulfate. However, the exact role of SLC35A3 still needs to be elucidated, it could be a member of a catalytically more efficient multiprotein complex rather than function independently as a single transporter. This Rattus norvegicus (Rat) protein is UDP-N-acetylglucosamine transporter (Slc35a3).